We begin with the raw amino-acid sequence, 425 residues long: Serine--tRNA ligase (425 aa).

Residue 232–234 (TSE) coordinates L-serine. ATP contacts are provided by residues 263–265 (RRE) and V279. E286 is a binding site for L-serine. 350–353 (EVVS) is an ATP binding site. T387 is an L-serine binding site.

The protein belongs to the class-II aminoacyl-tRNA synthetase family. Type-1 seryl-tRNA synthetase subfamily. In terms of assembly, homodimer. The tRNA molecule binds across the dimer.

It is found in the cytoplasm. It carries out the reaction tRNA(Ser) + L-serine + ATP = L-seryl-tRNA(Ser) + AMP + diphosphate + H(+). The enzyme catalyses tRNA(Sec) + L-serine + ATP = L-seryl-tRNA(Sec) + AMP + diphosphate + H(+). It functions in the pathway aminoacyl-tRNA biosynthesis; selenocysteinyl-tRNA(Sec) biosynthesis; L-seryl-tRNA(Sec) from L-serine and tRNA(Sec): step 1/1. Its function is as follows. Catalyzes the attachment of serine to tRNA(Ser). Is also able to aminoacylate tRNA(Sec) with serine, to form the misacylated tRNA L-seryl-tRNA(Sec), which will be further converted into selenocysteinyl-tRNA(Sec). In Methanoregula boonei (strain DSM 21154 / JCM 14090 / 6A8), this protein is Serine--tRNA ligase.